We begin with the raw amino-acid sequence, 921 residues long: Isoleucine--tRNA ligase 1 (921 aa).

Positions 57 to 67 (PYANGDIHMGH) match the 'HIGH' region motif. Glutamate 552 serves as a coordination point for L-isoleucyl-5'-AMP. Positions 593-597 (KMSKS) match the 'KMSKS' region motif. Residue lysine 596 participates in ATP binding. Zn(2+)-binding residues include cysteine 888, cysteine 891, cysteine 908, and cysteine 911.

Belongs to the class-I aminoacyl-tRNA synthetase family. IleS type 1 subfamily. As to quaternary structure, monomer. Requires Zn(2+) as cofactor.

The protein resides in the cytoplasm. It catalyses the reaction tRNA(Ile) + L-isoleucine + ATP = L-isoleucyl-tRNA(Ile) + AMP + diphosphate. In terms of biological role, catalyzes the attachment of isoleucine to tRNA(Ile). As IleRS can inadvertently accommodate and process structurally similar amino acids such as valine, to avoid such errors it has two additional distinct tRNA(Ile)-dependent editing activities. One activity is designated as 'pretransfer' editing and involves the hydrolysis of activated Val-AMP. The other activity is designated 'posttransfer' editing and involves deacylation of mischarged Val-tRNA(Ile). In Bacillus cereus (strain ZK / E33L), this protein is Isoleucine--tRNA ligase 1.